The primary structure comprises 129 residues: GM1b/asialo-GM1 oligosaccharide-binding R-type lectin (129 aa).

Residues 21 to 23 (FYN), 26 to 28 (RKD), phenylalanine 32, and 37 to 40 (YDDQ) each bind a carbohydrate.

In terms of assembly, homodimer. Highest expression in the outer part of the mantle rim. Highly expressed in gills, with a much lower expression in the digestive gland and posterior adductor muscle. Scarcely detectable in foot.

Hemagglutination activity requires divalent cations such as Ca(2+). Hemagglutination activity is weakly inhibited by monosaccharides such as D-Gal (25 mM), D-GalNAc (25 mM) and D-Fuc (25 mM) and by disaccharides such as melibiose (25 mM) and lactose (25 mM). Hemagglutination activity is inhibited by bovine submaxillary mucin, but not by porcine stomach mucin or fetuin. Its function is as follows. Galbeta1-3GalNAcbeta1-4Galbeta1-4Glc oligosaccharide-binding lectin. Binds strongly to the oligosaccharides of ganglioside GM1b and to a lesser extent its precursor asialo-GM1. Binds weakly to asialo-GM2 oligosaccharide and to the glycan moiety of globo-series stage-specific embryonal antigen 4 (SSEA-4) hexaose. Binds galactose, N-acetylgalactose and lactose. Does not bind GM1. Does not bind to Gal-beta1,3-GalNAc (Thomsen-Friedenreich antigen), the oligosaccharide of GM1a ganglioside or SSEA-4 tetraose. Does not bind to N-glycans, O-glycans or glycosaminoglycans of glycoproteins. Does not bind Lewis glycans, derivatives of lactose or N-acetyllactosamine or blood group (ABH-type) oligosaccharides. Does not bind glucose. Has hemagglutination activity towards rabbit erythrocytes. Displays cytotoxic effects against various cultured cell lines including human breast (MCF-7), cervical (HeLa) and colon cancer (Caco2) cell lines, as well as dog kidney (MDCK) cell line that express asialo-GM1 oligosaccharide at their cell surface. Shows dose- and time-dependent activation of MKK3/6, ERK1/2 and p38 MAPK, as well as caspase-3/9 in HeLa cervical cancer cells. No cytotoxic effect on BT474 human breast cancer cell line. May be involved in recognition of glycans found on parasitic or symbiotic microorganisms. This chain is GM1b/asialo-GM1 oligosaccharide-binding R-type lectin, found in Mytilisepta virgata (Purplish bifurcate mussel).